The chain runs to 272 residues: Zinc transporter ZupT (272 aa).

Helical transmembrane passes span 12–32 (ALAV…MVVF), 40–60 (LLAF…LSEI), 76–96 (LGFT…MVID), 126–146 (LLTA…TFFA), 158–178 (AFAI…PVYF), 187–207 (FGAS…GYLL), 211–231 (VLSE…MVFL), and 247–267 (HETV…LVLF). Fe(2+)-binding residues include Asn-136 and Glu-139. Residues Glu-139 and His-164 each coordinate Zn(2+). Residues Asn-165, Glu-168, and Glu-197 each coordinate Fe(2+). Zn(2+) is bound at residue Glu-168.

The protein belongs to the ZIP transporter (TC 2.A.5) family. ZupT subfamily.

Its subcellular location is the cell inner membrane. It catalyses the reaction Zn(2+)(in) = Zn(2+)(out). In terms of biological role, mediates zinc uptake. May also transport other divalent cations. The polypeptide is Zinc transporter ZupT (Xanthomonas campestris pv. campestris (strain ATCC 33913 / DSM 3586 / NCPPB 528 / LMG 568 / P 25)).